Here is a 796-residue protein sequence, read N- to C-terminus: AUGMIN subunit 5 (796 aa).

The tract at residues 79 to 120 (HGGSSNASIGSSVNPGKEESKSKGRRKDKTVTGESSSYAEDR) is disordered. Residues 80-92 (GGSSNASIGSSVN) show a composition bias toward polar residues. Coiled coils occupy residues 115–191 (SYAE…EATR) and 462–501 (GKER…LKKK).

The protein belongs to the HAUS5 family. In terms of assembly, part of the augmin complex composed of 8 subunits. The complex acts on microtubules and interacts with gamma-tubulin in spindles and the phragmoplast.

Its subcellular location is the cytoplasm. The protein resides in the cytoskeleton. It localises to the spindle. It is found in the phragmoplast. Its function is as follows. Involved in microtubules reorganization during spindle and phragmoplast development. This is AUGMIN subunit 5 from Arabidopsis thaliana (Mouse-ear cress).